The chain runs to 134 residues: Histone H3-like centromeric protein A (134 aa).

A compositionally biased stretch (basic residues) spans 1–14 (MGPRRKPQTPRRRP). The segment at 1–34 (MGPRRKPQTPRRRPSSPAPGPSRQSSSVGSQTLR) is disordered. Residue Gly-2 is modified to N,N,N-trimethylglycine. Phosphoserine is present on residues Ser-16 and Ser-22. The tract at residues 34 to 48 (RRRQKFMWLKEIKTL) is important for flexibility of DNA ends that protrude from nucleosomes. Residues 35–134 (RRQKFMWLKE…RIRGFEGGLP (100 aa)) are H3-like. Residue Ser-62 is modified to Phosphoserine. Residues 69–110 (CEKFSRGVDFWWQAQALLALQEAAEAFLIHLFEDAYLLSLHA) form a CATD region.

The protein belongs to the histone H3 family. As to quaternary structure, component of centromeric nucleosomes, where DNA is wrapped around a histone octamer core. The octamer contains two molecules each of H2A, H2B, CENPA and H4 assembled in one CENPA-H4 heterotetramer and two H2A-H2B heterodimers. CENPA modulates the DNA-binding characteristics of nucleosomes so that protruding DNA ends have higher flexibility than in nucleosomes containing conventional histone H3. Inhibits binding of histone H1 to nucleosomes, since histone H1 binds preferentially to rigid DNA linkers that protrude from nucleosomes. Nucleosomes containing CENPA also contain histone H2A variants such as MACROH2A and H2A.Z/H2AZ1. The CENPA-H4 heterotetramer is more compact and structurally more rigid than corresponding H3-H4 heterotetramers. Can assemble into nucleosomes that contain both CENPA and histone H3.3; these nucleosomes interact with a single CENPC chain. Heterotrimer composed of HJURP, CENPA and histone H4, where HJURP interacts with the dimer formed by CENPA and histone H4 and prevents tetramerization of CENPA and H4. Component of the CENPA-NAC complex, at least composed of CENPA, CENPC, CENPH, CENPM, CENPN, CENPT and CENPU. Interacts (via CATD domain) with HJURP; the interaction is direct and is required for its localization to centromeres. Interacts with CENPC, CENPN and CENPT; interaction is direct. Part of a centromere complex consisting of CENPA, CENPT and CENPW. Identified in centromere complexes containing histones H2A, H2B and H4, and at least CENPA, CENPB, CENPC, CENPT, CENPN, HJURP, SUPT16H, SSRP1 and RSF1. Can self-associate. The CENPA-H4 heterotetramer can bind DNA by itself (in vitro). Interacts with CDK1, PPP1CA and RBBP7. In terms of processing, poly-ADP-ribosylated by PARP1. Trimethylated by NTMT1 at the N-terminal glycine after cleavage of Met-1. Methylation is low before incorporation into nucleosomes and increases with cell cycle progression, with the highest levels in mitotic nucleosomes. Post-translationally, phosphorylated by CDK1 at Ser-62 during early mitosis; this abolishes association with chromatin and centromeres, prevents interaction with HJURP and thereby prevents premature assembly of CENPA into centromeres. Dephosphorylated at Ser-62 by PPP1CA during late mitosis.

Its subcellular location is the nucleus. The protein localises to the chromosome. It is found in the centromere. Functionally, histone H3-like nucleosomal protein that is specifically found in centromeric nucleosomes. Replaces conventional H3 in the nucleosome core of centromeric chromatin that serves as an assembly site for the inner kinetochore. The presence of CENPA subtly modifies the nucleosome structure and the way DNA is wrapped around the nucleosome and gives rise to protruding DNA ends that are less well-ordered and rigid compared to nucleosomes containing histone H3. May serve as an epigenetic mark that propagates centromere identity through replication and cell division. Required for recruitment and assembly of kinetochore proteins, and as a consequence required for progress through mitosis, chromosome segregation and cytokinesis. The chain is Histone H3-like centromeric protein A (Cenpa) from Mus musculus (Mouse).